Here is a 598-residue protein sequence, read N- to C-terminus: Elongation factor 4 (598 aa).

The tr-type G domain occupies 2 to 184 (NNIRNFAIIA…AIVAKLPAPQ (183 aa)). Residues 14-19 (DHGKST) and 131-134 (NKVD) contribute to the GTP site.

Belongs to the TRAFAC class translation factor GTPase superfamily. Classic translation factor GTPase family. LepA subfamily.

Its subcellular location is the cell membrane. It carries out the reaction GTP + H2O = GDP + phosphate + H(+). In terms of biological role, required for accurate and efficient protein synthesis under certain stress conditions. May act as a fidelity factor of the translation reaction, by catalyzing a one-codon backward translocation of tRNAs on improperly translocated ribosomes. Back-translocation proceeds from a post-translocation (POST) complex to a pre-translocation (PRE) complex, thus giving elongation factor G a second chance to translocate the tRNAs correctly. Binds to ribosomes in a GTP-dependent manner. This Wolbachia sp. subsp. Drosophila simulans (strain wRi) protein is Elongation factor 4.